Consider the following 434-residue polypeptide: Protein ENHANCED PSEUDOMONAS SUSCEPTIBILITY 1 (434 aa).

D376 (proton acceptor) is an active-site residue.

Belongs to the plant acyltransferase family.

Its function is as follows. Required for pathogen-induced salicylic acid (SA) accumulation and SA-mediated resistance to virulent and avirulent pathogens (e.g. P.syringae). The sequence is that of Protein ENHANCED PSEUDOMONAS SUSCEPTIBILITY 1 from Arabidopsis thaliana (Mouse-ear cress).